We begin with the raw amino-acid sequence, 266 residues long: Non-structural maintenance of chromosomes element 1 homolog (266 aa).

The tract at residues 1–102 (MQGSTRRMGV…SISKMATDFA (102 aa)) is interaction with NSMCE3. The RING-type; atypical zinc finger occupies 191 to 232 (CNICHSLLIQGQSCETCGIRMHLPCVAKYFQSNAEPRCPHCN). Residues 246–266 (EKERESGVLKSNKKSLRSRQH) are disordered. Serine 251 carries the post-translational modification Phosphoserine. Residues 256-266 (SNKKSLRSRQH) are compositionally biased toward basic residues.

It belongs to the NSE1 family. Component of the SMC5-SMC6 complex which consists at least of SMC5, SMC6, NSMCE2, NSMCE1, NSMCE4A or EID3 and NSMCE3. NSMCE1, NSMCE4A or EID3 and NSMCE3 probably form a subcomplex that bridges the head domains of the SMC5-SMC6 heterodimer. Interacts with NSMCE3. Interacts with MAGEF1. In terms of processing, ubiquitinated.

Its subcellular location is the nucleus. The protein localises to the chromosome. The protein resides in the telomere. The enzyme catalyses S-ubiquitinyl-[E2 ubiquitin-conjugating enzyme]-L-cysteine + [acceptor protein]-L-lysine = [E2 ubiquitin-conjugating enzyme]-L-cysteine + N(6)-ubiquitinyl-[acceptor protein]-L-lysine.. Functionally, RING-type zinc finger-containing E3 ubiquitin ligase that assembles with melanoma antigen protein (MAGE) to catalyze the direct transfer of ubiquitin from E2 ubiquitin-conjugating enzyme to a specific substrate. Within MAGE-RING ubiquitin ligase complex, MAGE stimulates and specifies ubiquitin ligase activity likely through recruitment and/or stabilization of the E2 ubiquitin-conjugating enzyme at the E3:substrate complex. Involved in maintenance of genome integrity, DNA damage response and DNA repair. NSMCE3/MAGEG1 and NSMCE1 ubiquitin ligase are components of SMC5-SMC6 complex and may positively regulate homologous recombination-mediated DNA repair. MAGEF1-NSMCE1 ubiquitin ligase promotes proteasomal degradation of MMS19, a key component of the cytosolic iron-sulfur protein assembly (CIA) machinery. Down-regulation of MMS19 impairs the activity of several DNA repair and metabolism enzymes such as ERCC2/XPD, FANCJ, RTEL1 and POLD1 that require iron-sulfur clusters as cofactors. The polypeptide is Non-structural maintenance of chromosomes element 1 homolog (Homo sapiens (Human)).